We begin with the raw amino-acid sequence, 75 residues long: Conotoxin Vn5.6 (75 aa).

The N-terminal stretch at 1-19 (MLCLPVFIILLLLASPAAP) is a signal peptide. Positions 20 to 59 (NPLEKRIQSDLIRAALEDADMKTGEREILNIIDSISDVAK) are excised as a propeptide. Gln60 carries the post-translational modification Pyrrolidone carboxylic acid.

Belongs to the conotoxin T superfamily. Contains 2 disulfide bonds that can be either 'C1-C3, C2-C4' or 'C1-C4, C2-C3', since these disulfide connectivities have been observed for conotoxins with cysteine framework V (for examples, see AC P0DQQ7 and AC P81755). As to expression, expressed by the venom duct.

Its subcellular location is the secreted. This is Conotoxin Vn5.6 from Conus ventricosus (Mediterranean cone).